Reading from the N-terminus, the 660-residue chain is Bifunctional polymyxin resistance protein ArnA (660 aa).

The interval 1 to 304 is formyltransferase ArnAFT; it reads MKTVVFAYHD…TLGLVQGSRL (304 aa). 86–88 provides a ligand contact to (6R)-10-formyltetrahydrofolate; sequence HLI. His104 (proton donor; for formyltransferase activity) is an active-site residue. Residues Arg114 and 136 to 140 each bind (6R)-10-formyltetrahydrofolate; that span reads VKRAD. Residues 314 to 660 form a dehydrogenase ArnADH region; the sequence is RRTRVLILGV…RTVDLTDKPS (347 aa). NAD(+) contacts are provided by residues Asp347 and 368–369; that span reads DI. UDP-alpha-D-glucuronate contacts are provided by residues Ala393, Tyr398, and 432 to 433; that span reads TS. The active-site Proton acceptor; for decarboxylase activity is Glu434. UDP-alpha-D-glucuronate contacts are provided by residues Arg460, Asn492, 526–535, and Tyr613; that span reads KLIDGGKQKR. The Proton donor; for decarboxylase activity role is filled by Arg619.

This sequence in the N-terminal section; belongs to the Fmt family. UDP-L-Ara4N formyltransferase subfamily. It in the C-terminal section; belongs to the NAD(P)-dependent epimerase/dehydratase family. UDP-glucuronic acid decarboxylase subfamily. In terms of assembly, homohexamer, formed by a dimer of trimers.

It catalyses the reaction UDP-alpha-D-glucuronate + NAD(+) = UDP-beta-L-threo-pentopyranos-4-ulose + CO2 + NADH. It carries out the reaction UDP-4-amino-4-deoxy-beta-L-arabinose + (6R)-10-formyltetrahydrofolate = UDP-4-deoxy-4-formamido-beta-L-arabinose + (6S)-5,6,7,8-tetrahydrofolate + H(+). The protein operates within nucleotide-sugar biosynthesis; UDP-4-deoxy-4-formamido-beta-L-arabinose biosynthesis; UDP-4-deoxy-4-formamido-beta-L-arabinose from UDP-alpha-D-glucuronate: step 1/3. Its pathway is nucleotide-sugar biosynthesis; UDP-4-deoxy-4-formamido-beta-L-arabinose biosynthesis; UDP-4-deoxy-4-formamido-beta-L-arabinose from UDP-alpha-D-glucuronate: step 3/3. It functions in the pathway bacterial outer membrane biogenesis; lipopolysaccharide biosynthesis. In terms of biological role, bifunctional enzyme that catalyzes the oxidative decarboxylation of UDP-glucuronic acid (UDP-GlcUA) to UDP-4-keto-arabinose (UDP-Ara4O) and the addition of a formyl group to UDP-4-amino-4-deoxy-L-arabinose (UDP-L-Ara4N) to form UDP-L-4-formamido-arabinose (UDP-L-Ara4FN). The modified arabinose is attached to lipid A and is required for resistance to polymyxin and cationic antimicrobial peptides. The polypeptide is Bifunctional polymyxin resistance protein ArnA (Escherichia coli (strain SMS-3-5 / SECEC)).